Here is a 425-residue protein sequence, read N- to C-terminus: Dihydroorotase (425 aa).

Zn(2+) contacts are provided by His59 and His61. Residues 61–63 and Asn93 each bind substrate; that span reads HLR. Asp151, His178, and His231 together coordinate Zn(2+). Asn277 serves as a coordination point for substrate. A Zn(2+)-binding site is contributed by Asp304. Residue Asp304 is part of the active site. Residues His308 and 322-323 each bind substrate; that span reads FG.

This sequence belongs to the metallo-dependent hydrolases superfamily. DHOase family. Class I DHOase subfamily. Zn(2+) serves as cofactor.

The enzyme catalyses (S)-dihydroorotate + H2O = N-carbamoyl-L-aspartate + H(+). It functions in the pathway pyrimidine metabolism; UMP biosynthesis via de novo pathway; (S)-dihydroorotate from bicarbonate: step 3/3. Its function is as follows. Catalyzes the reversible cyclization of carbamoyl aspartate to dihydroorotate. This is Dihydroorotase from Staphylococcus epidermidis (strain ATCC 12228 / FDA PCI 1200).